The primary structure comprises 21 residues: Paulistine (21 aa).

Cysteine 7 and cysteine 14 are joined by a disulfide. Threonine 21 bears the Threonine amide mark.

The protein belongs to the sylv/frat/paul family. Occurs in oxidized and reduced states which are thought to adopt a compact globular and linear structure, respectively.

In terms of biological role, induces transient hyperalgesia and paw edema in mice. Probably exerts its effects via different pathways in an oxidation state-dependent way. This Polybia paulista (Neotropical social wasp) protein is Paulistine.